A 348-amino-acid chain; its full sequence is Chaperone protein DnaJ (348 aa).

The 63-residue stretch at Asp3–Val65 folds into the J domain. The segment at Gly109–Pro191 adopts a CR-type zinc-finger fold. Cys122, Cys125, Cys139, Cys142, Cys165, Cys168, Cys179, and Cys182 together coordinate Zn(2+). CXXCXGXG motif repeat units lie at residues Cys122–Arg129, Cys139–Gly146, Cys165–Gly172, and Cys179–Gly186.

Belongs to the DnaJ family. In terms of assembly, homodimer. The cofactor is Zn(2+).

It is found in the cytoplasm. Participates actively in the response to hyperosmotic and heat shock by preventing the aggregation of stress-denatured proteins and by disaggregating proteins, also in an autonomous, DnaK-independent fashion. Unfolded proteins bind initially to DnaJ; upon interaction with the DnaJ-bound protein, DnaK hydrolyzes its bound ATP, resulting in the formation of a stable complex. GrpE releases ADP from DnaK; ATP binding to DnaK triggers the release of the substrate protein, thus completing the reaction cycle. Several rounds of ATP-dependent interactions between DnaJ, DnaK and GrpE are required for fully efficient folding. Also involved, together with DnaK and GrpE, in the DNA replication of plasmids through activation of initiation proteins. The sequence is that of Chaperone protein DnaJ from Tropheryma whipplei (strain Twist) (Whipple's bacillus).